The chain runs to 114 residues: Large ribosomal subunit protein uL22 (114 aa).

The protein belongs to the universal ribosomal protein uL22 family. Part of the 50S ribosomal subunit.

This protein binds specifically to 23S rRNA; its binding is stimulated by other ribosomal proteins, e.g. L4, L17, and L20. It is important during the early stages of 50S assembly. It makes multiple contacts with different domains of the 23S rRNA in the assembled 50S subunit and ribosome. Functionally, the globular domain of the protein is located near the polypeptide exit tunnel on the outside of the subunit, while an extended beta-hairpin is found that lines the wall of the exit tunnel in the center of the 70S ribosome. The sequence is that of Large ribosomal subunit protein uL22 from Streptococcus pneumoniae (strain Taiwan19F-14).